A 101-amino-acid polypeptide reads, in one-letter code: Small integral membrane protein 21 (101 aa).

Residues 49 to 65 (HIRFFTLLVLFHVMVLL) traverse the membrane as a helical segment.

It localises to the membrane. In Homo sapiens (Human), this protein is Small integral membrane protein 21 (SMIM21).